The chain runs to 187 residues: Ribosome-recycling factor (187 aa).

It belongs to the RRF family.

Its subcellular location is the cytoplasm. Functionally, responsible for the release of ribosomes from messenger RNA at the termination of protein biosynthesis. May increase the efficiency of translation by recycling ribosomes from one round of translation to another. The protein is Ribosome-recycling factor of Xanthobacter autotrophicus (strain ATCC BAA-1158 / Py2).